The primary structure comprises 644 residues: G-protein coupled receptor-associated protein LMBRD2 (644 aa).

The Extracellular segment spans residues 1–4; it reads MGTV. The chain crosses the membrane as a helical span at residues 5-27; sequence SLAVQLFIVFLLTSYLLNKYSTI. At 28 to 31 the chain is on the cytoplasmic side; sequence RKQN. Residues 32–52 form a helical membrane-spanning segment; it reads PIVTISTFIGWYFSLIIVFVL. The Extracellular portion of the chain corresponds to 53–102; the sequence is PLDVAITFFHKCENDRQRVLNTTSTPAPIVPECELPGGYVPDDVLFDLWR. Residue asparagine 73 is glycosylated (N-linked (GlcNAc...) asparagine). The chain crosses the membrane as a helical span at residues 103 to 123; it reads VVYWSAQILTWLILPLLQSYV. The Cytoplasmic segment spans residues 124–145; sequence TAGNFTIFGKIRAAVINNTVYY. A helical membrane pass occupies residues 146 to 166; the sequence is AIYSLCFLAILIYAMFKGVSI. Over 167–172 the chain is Extracellular; that stretch reads NIENLK. A helical membrane pass occupies residues 173 to 193; sequence VILVSASNTWGLFLLVVLLGH. Topologically, residues 194–369 are cytoplasmic; sequence GLVELPRSLW…RLQTPFCRVL (176 aa). Positions 216–245 form a coiled coil; the sequence is YFDIEKLASEKSEAEENVKEIYKKVRVLFN. Residues 370-390 form a helical membrane-spanning segment; that stretch reads GVVTVFMTFFVLFSECTFFVV. Residues 391 to 412 are Extracellular-facing; that stretch reads SYTVSPAAFVTEYASNRFHYKY. Residues 413-433 form a helical membrane-spanning segment; sequence TQFVAFGIIVYLITCAYFTIF. The Cytoplasmic segment spans residues 434–453; it reads RLQIYKYYHLDPNGHTDENS. The helical transmembrane segment at 454–474 threads the bilayer; it reads ILFSAILLCRLTPPICLNFLG. Over 475–502 the chain is Extracellular; the sequence is MIHMDSHVSMAKSFGVETQFTKLMGHLD. Residues 503-523 traverse the membrane as a helical segment; the sequence is VIPILAKGINIYLPICIILLC. At 524–644 the chain is on the cytoplasmic side; that stretch reads AIHYYRVGAY…PSSSGFFDDM (121 aa). Basic and acidic residues predominate over residues 567–576; sequence SIKRSNERNQ. The disordered stretch occupies residues 567–644; that stretch reads SIKRSNERNQ…PSSSGFFDDM (78 aa). Positions 578 to 594 are enriched in low complexity; it reads NQSWTNTITSNTSTTSN. The segment covering 621–644 has biased composition (polar residues); that stretch reads VSSTTRISLSPTEHPSSSGFFDDM.

It belongs to the LIMR family.

It is found in the cell membrane. In terms of biological role, may associate with G-protein coupled receptors and regulate downstream signaling pathways. The sequence is that of G-protein coupled receptor-associated protein LMBRD2 from Caenorhabditis briggsae.